A 1073-amino-acid polypeptide reads, in one-letter code: ATP-dependent helicase/deoxyribonuclease subunit B (1073 aa).

It belongs to the helicase family. AddB/RexB type 2 subfamily. In terms of assembly, heterodimer of AddA and RexB. Requires Mg(2+) as cofactor.

In terms of biological role, the heterodimer acts as both an ATP-dependent DNA helicase and an ATP-dependent, dual-direction single-stranded exonuclease. Recognizes the chi site generating a DNA molecule suitable for the initiation of homologous recombination. This subunit has 5' -&gt; 3' nuclease activity but not helicase activity. This is ATP-dependent helicase/deoxyribonuclease subunit B from Streptococcus equi subsp. zooepidemicus (strain MGCS10565).